Reading from the N-terminus, the 157-residue chain is MRIGHGYDVHRFCDGDFITLGGVRIPHKYGLLAHSDGDVLLHALSDALLGAAGLGDIGKHFPDTDPQFKGADSRVLLRHVVGIVQAKGWKVGNVDATIVAQAPKMSPHIETMRQRIAEDLQVELDQVNVKATTTEKLGFTGREEGIAVHAVALLLPA.

The a divalent metal cation site is built by Asp-8 and His-10. Residues 8–10 (DVH) and 34–35 (HS) each bind 4-CDP-2-C-methyl-D-erythritol 2-phosphate. His-42 is a binding site for a divalent metal cation. Residues 56-58 (DIG), 61-65 (FPDTD), 132-135 (TTTE), Phe-139, and Arg-142 contribute to the 4-CDP-2-C-methyl-D-erythritol 2-phosphate site.

The protein belongs to the IspF family. Homotrimer. It depends on a divalent metal cation as a cofactor.

It catalyses the reaction 4-CDP-2-C-methyl-D-erythritol 2-phosphate = 2-C-methyl-D-erythritol 2,4-cyclic diphosphate + CMP. It participates in isoprenoid biosynthesis; isopentenyl diphosphate biosynthesis via DXP pathway; isopentenyl diphosphate from 1-deoxy-D-xylulose 5-phosphate: step 4/6. Functionally, involved in the biosynthesis of isopentenyl diphosphate (IPP) and dimethylallyl diphosphate (DMAPP), two major building blocks of isoprenoid compounds. Catalyzes the conversion of 4-diphosphocytidyl-2-C-methyl-D-erythritol 2-phosphate (CDP-ME2P) to 2-C-methyl-D-erythritol 2,4-cyclodiphosphate (ME-CPP) with a corresponding release of cytidine 5-monophosphate (CMP). The polypeptide is 2-C-methyl-D-erythritol 2,4-cyclodiphosphate synthase (Pseudomonas putida (strain W619)).